Consider the following 95-residue polypeptide: Protein TusB (95 aa).

The protein belongs to the DsrH/TusB family. As to quaternary structure, heterohexamer, formed by a dimer of trimers. The hexameric TusBCD complex contains 2 copies each of TusB, TusC and TusD. The TusBCD complex interacts with TusE.

Its subcellular location is the cytoplasm. In terms of biological role, part of a sulfur-relay system required for 2-thiolation of 5-methylaminomethyl-2-thiouridine (mnm(5)s(2)U) at tRNA wobble positions. The protein is Protein TusB of Escherichia coli O157:H7.